The sequence spans 624 residues: Dihydroxy-acid dehydratase (624 aa).

Residue D81 coordinates Mg(2+). C122 is a binding site for [2Fe-2S] cluster. Mg(2+) contacts are provided by D123 and K124. K124 carries the N6-carboxylysine modification. C195 provides a ligand contact to [2Fe-2S] cluster. E499 contacts Mg(2+). Residue S525 is the Proton acceptor of the active site.

The protein belongs to the IlvD/Edd family. Homodimer. It depends on [2Fe-2S] cluster as a cofactor. Mg(2+) is required as a cofactor.

The enzyme catalyses (2R)-2,3-dihydroxy-3-methylbutanoate = 3-methyl-2-oxobutanoate + H2O. It carries out the reaction (2R,3R)-2,3-dihydroxy-3-methylpentanoate = (S)-3-methyl-2-oxopentanoate + H2O. The protein operates within amino-acid biosynthesis; L-isoleucine biosynthesis; L-isoleucine from 2-oxobutanoate: step 3/4. It participates in amino-acid biosynthesis; L-valine biosynthesis; L-valine from pyruvate: step 3/4. Its function is as follows. Functions in the biosynthesis of branched-chain amino acids. Catalyzes the dehydration of (2R,3R)-2,3-dihydroxy-3-methylpentanoate (2,3-dihydroxy-3-methylvalerate) into 2-oxo-3-methylpentanoate (2-oxo-3-methylvalerate) and of (2R)-2,3-dihydroxy-3-methylbutanoate (2,3-dihydroxyisovalerate) into 2-oxo-3-methylbutanoate (2-oxoisovalerate), the penultimate precursor to L-isoleucine and L-valine, respectively. This is Dihydroxy-acid dehydratase from Shewanella baltica (strain OS155 / ATCC BAA-1091).